The chain runs to 448 residues: Ribosomal protein uS12 methylthiotransferase RimO (448 aa).

The 116-residue stretch at 13-128 folds into the MTTase N-terminal domain; that stretch reads KSFFITTLGC…AGEILRKNFP (116 aa). Residues cysteine 22, cysteine 58, cysteine 91, cysteine 167, cysteine 171, and cysteine 174 each contribute to the [4Fe-4S] cluster site. In terms of domain architecture, Radical SAM core spans 153 to 382; the sequence is NYSKPYSYVK…AYLGTLKTIH (230 aa). The 66-residue stretch at 383–448 folds into the TRAM domain; sequence QNRIGKIYPC…ELDMSGTWVD (66 aa).

It belongs to the methylthiotransferase family. RimO subfamily. [4Fe-4S] cluster is required as a cofactor.

It is found in the cytoplasm. It catalyses the reaction L-aspartate(89)-[ribosomal protein uS12]-hydrogen + (sulfur carrier)-SH + AH2 + 2 S-adenosyl-L-methionine = 3-methylsulfanyl-L-aspartate(89)-[ribosomal protein uS12]-hydrogen + (sulfur carrier)-H + 5'-deoxyadenosine + L-methionine + A + S-adenosyl-L-homocysteine + 2 H(+). Its function is as follows. Catalyzes the methylthiolation of an aspartic acid residue of ribosomal protein uS12. This is Ribosomal protein uS12 methylthiotransferase RimO from Leptospira biflexa serovar Patoc (strain Patoc 1 / Ames).